Here is a 520-residue protein sequence, read N- to C-terminus: Putative transporter svop-1 (520 aa).

At 1-85 (MGDKAILTEV…LGFGRFQLKL (85 aa)) the chain is on the cytoplasmic side. The chain crosses the membrane as a helical span at residues 86–106 (SILTGMAWMADAMEMMLLSLI). Topologically, residues 107-120 (SPALACEWGISSVQ) are extracellular. A helical membrane pass occupies residues 121–141 (QALVTTCVFSGMMLSSTFWGK). Over 142–157 (ICDRFGRRKGLTFSTL) the chain is Cytoplasmic. Residues 158–178 (VACIMGVISGMSPHFYVLLFF) traverse the membrane as a helical segment. Position 179 (Arg179) is a topological domain, extracellular. Residues 180 to 200 (GLTGFGIGGVPQSVTLYAEFL) traverse the membrane as a helical segment. The Cytoplasmic segment spans residues 201-208 (PTAQRAKC). A helical transmembrane segment spans residues 209-229 (VVLIESFWAIGAVFEALLAYF). Over 230-237 (VMESFGWR) the chain is Extracellular. A helical transmembrane segment spans residues 238 to 258 (ALMFLSSLPLGIFAVASFWLP). At 259 to 319 (ESARFDMASG…LLSPDLRKTT (61 aa)) the chain is on the cytoplasmic side. Residues 320-340 (ILLWCIWAITAFSYYGMVLFT) traverse the membrane as a helical segment. Residues 341–372 (TVLFQSHDECHGGLFSNGTQMEVCQPLTRSDY) lie on the Extracellular side of the membrane. A helical transmembrane segment spans residues 373 to 393 (FDLLSTTLAEFPGLIITVLII). Over 394–410 (EWFGRKKTMALEYAVFA) the chain is Cytoplasmic. A helical membrane pass occupies residues 411-431 (IFTFLLYFCLDRFTVTVLIFV). Over 432–434 (ARA) the chain is Extracellular. The helical transmembrane segment at 435–455 (FISGAFQCAYVYTPEVYPTTL) threads the bilayer. At 456–461 (RAVGLG) the chain is on the cytoplasmic side. A helical membrane pass occupies residues 462–487 (TCSAMARIGAIVTPFIAQVASEKSLS). Over 488 to 489 (LP) the chain is Extracellular. Residues 490-509 (IGIYGTAAILGLIASLSLPI) traverse the membrane as a helical segment. Over 510–520 (ETKGRQMMDSH) the chain is Cytoplasmic.

The protein belongs to the major facilitator superfamily.

It localises to the membrane. The chain is Putative transporter svop-1 from Caenorhabditis elegans.